The primary structure comprises 629 residues: Pumilio homolog 3 (629 aa).

Basic residues-rich tracts occupy residues 1 to 10 and 18 to 37; these read MEGKPRKKSF and PSFK…RPFK. The interval 1–92 is disordered; that stretch reads MEGKPRKKSF…EGDERKKPKW (92 aa). Residues 62–92 show a composition bias toward basic and acidic residues; the sequence is KPTDGKFAKKRKFPGDRIKQEEGDERKKPKW. Positions 88–100 match the Nuclear localization signal motif; it reads KKPKWDEFKQKKK. The PUM-HD domain maps to 120–473; the sequence is RAKQVWEMVR…ELLEAASPSL (354 aa). Pumilio repeat units follow at residues 160-195, 196-231, 232-260, 272-308, 309-344, 345-380, 381-418, 419-487, 488-534, 535-579, and 580-618; these read HDST…LSKS, KYAR…MLRH, SEAS…ELYG, PTLE…VIKH, SLVH…MAHT, HDGA…FAMG, EYAH…IISN, KHGK…MVMD, KSCC…MAEH, PAGH…WASV, and NRGA…LQNS.

In terms of tissue distribution, in adult, expressed at high levels in eye and ovary and at lower levels in brain, testis and head kidney. In the adult ovary, prominently expressed in early immature follicles.

The protein localises to the nucleus. It is found in the nucleolus. It localises to the nucleoplasm. The protein resides in the chromosome. In terms of biological role, inhibits the poly(ADP-ribosyl)ation activity of PARP1 and the degradation of PARP1 by CASP3 following genotoxic stress. Binds to double-stranded RNA or DNA without sequence specificity. Involved in development of the eye and of primordial germ cells. The protein is Pumilio homolog 3 (pum3) of Danio rerio (Zebrafish).